Consider the following 498-residue polypeptide: ATP synthase subunit alpha, chloroplastic (498 aa).

Position 170 to 177 (170 to 177 (GDRQTGKT)) interacts with ATP.

Belongs to the ATPase alpha/beta chains family. In terms of assembly, F-type ATPases have 2 components, CF(1) - the catalytic core - and CF(0) - the membrane proton channel. CF(1) has five subunits: alpha(3), beta(3), gamma(1), delta(1), epsilon(1). CF(0) has four main subunits: a, b, b' and c.

It localises to the plastid. Its subcellular location is the chloroplast thylakoid membrane. It carries out the reaction ATP + H2O + 4 H(+)(in) = ADP + phosphate + 5 H(+)(out). Produces ATP from ADP in the presence of a proton gradient across the membrane. The alpha chain is a regulatory subunit. In Oltmannsiellopsis viridis (Marine flagellate), this protein is ATP synthase subunit alpha, chloroplastic.